Consider the following 152-residue polypeptide: Small integral membrane protein 28 (152 aa).

A helical membrane pass occupies residues 52-72 (FLCILLPATILLFLAFLLLFL). The disordered stretch occupies residues 117 to 152 (PLPPEATLPSQCLPPSYEEATRNPPGEEAQGCSPSV).

The protein localises to the membrane. In Homo sapiens (Human), this protein is Small integral membrane protein 28.